A 268-amino-acid polypeptide reads, in one-letter code: L-proline trans-4-hydroxylase (268 aa).

His-113, Asp-115, and His-218 together coordinate Fe cation.

The protein belongs to the PhyH family. In terms of assembly, monomer. Fe(2+) is required as a cofactor.

It carries out the reaction L-proline + 2-oxoglutarate + O2 = trans-4-hydroxy-L-proline + succinate + CO2. Its pathway is antibiotic biosynthesis. With respect to regulation, competitively inhibited by pyridine-2,4-dicarboxylate. Inhibited by diethyl pyrocarbonate (DEPC), 3,4-dihydroxybenzoate, pyridine-2,5-dicarboxylate, alpha,alpha'-dipyridyl, and some metal ions such as Co(2+) and Zn(2+). Functionally, involved in the biosynthesis of the peptidolactone antibiotic etamycin (viridogrisein). Catalyzes the hydroxylation of free L-proline at the C-4 position to yield trans-4-hydroxy-L-proline. In Streptomyces griseoviridis, this protein is L-proline trans-4-hydroxylase.